We begin with the raw amino-acid sequence, 287 residues long: Phosphatidylserine decarboxylase proenzyme (287 aa).

Residues Asp-89, His-146, and Ser-252 each act as charge relay system; for autoendoproteolytic cleavage activity in the active site. Ser-252 acts as the Schiff-base intermediate with substrate; via pyruvic acid; for decarboxylase activity in catalysis. A Pyruvic acid (Ser); by autocatalysis modification is found at Ser-252.

This sequence belongs to the phosphatidylserine decarboxylase family. PSD-B subfamily. Prokaryotic type I sub-subfamily. Heterodimer of a large membrane-associated beta subunit and a small pyruvoyl-containing alpha subunit. The cofactor is pyruvate. In terms of processing, is synthesized initially as an inactive proenzyme. Formation of the active enzyme involves a self-maturation process in which the active site pyruvoyl group is generated from an internal serine residue via an autocatalytic post-translational modification. Two non-identical subunits are generated from the proenzyme in this reaction, and the pyruvate is formed at the N-terminus of the alpha chain, which is derived from the carboxyl end of the proenzyme. The autoendoproteolytic cleavage occurs by a canonical serine protease mechanism, in which the side chain hydroxyl group of the serine supplies its oxygen atom to form the C-terminus of the beta chain, while the remainder of the serine residue undergoes an oxidative deamination to produce ammonia and the pyruvoyl prosthetic group on the alpha chain. During this reaction, the Ser that is part of the protease active site of the proenzyme becomes the pyruvoyl prosthetic group, which constitutes an essential element of the active site of the mature decarboxylase.

The protein localises to the cell membrane. It catalyses the reaction a 1,2-diacyl-sn-glycero-3-phospho-L-serine + H(+) = a 1,2-diacyl-sn-glycero-3-phosphoethanolamine + CO2. The protein operates within phospholipid metabolism; phosphatidylethanolamine biosynthesis; phosphatidylethanolamine from CDP-diacylglycerol: step 2/2. Its function is as follows. Catalyzes the formation of phosphatidylethanolamine (PtdEtn) from phosphatidylserine (PtdSer). This is Phosphatidylserine decarboxylase proenzyme from Shewanella halifaxensis (strain HAW-EB4).